Here is an 852-residue protein sequence, read N- to C-terminus: Eukaryotic translation initiation factor 3 subunit C (852 aa).

Residues methionine 1–lysine 90 are disordered. Residues serine 14–serine 57 show a composition bias toward acidic residues. The PCI domain occupies phenylalanine 597–histidine 772. Polar residues predominate over residues threonine 798–methionine 809. The disordered stretch occupies residues threonine 798–alanine 852. The segment covering glutamine 810 to glutamine 822 has biased composition (low complexity). A compositionally biased stretch (basic and acidic residues) spans lysine 823–arginine 835. A compositionally biased stretch (polar residues) spans valine 841 to alanine 852.

Belongs to the eIF-3 subunit C family. In terms of assembly, component of the eukaryotic translation initiation factor 3 (eIF-3) complex.

The protein localises to the cytoplasm. Its function is as follows. Component of the eukaryotic translation initiation factor 3 (eIF-3) complex, which is involved in protein synthesis of a specialized repertoire of mRNAs and, together with other initiation factors, stimulates binding of mRNA and methionyl-tRNAi to the 40S ribosome. The eIF-3 complex specifically targets and initiates translation of a subset of mRNAs involved in cell proliferation. The sequence is that of Eukaryotic translation initiation factor 3 subunit C from Debaryomyces hansenii (strain ATCC 36239 / CBS 767 / BCRC 21394 / JCM 1990 / NBRC 0083 / IGC 2968) (Yeast).